An 846-amino-acid chain; its full sequence is Interleukin cytokine receptor-related protein 1 (846 aa).

An N-terminal signal peptide occupies residues 1 to 25 (MFLHSPALLIWLFLFCLAGPQAVRT). At 26-418 (EPYNSTSSSS…KEDTTWTWHT (393 aa)) the chain is on the extracellular side. Residues N29, N79, N186, N214, N339, and N395 are each glycosylated (N-linked (GlcNAc...) asparagine). A disordered region spans residues 388–409 (EKPPATSNQTEESDGKAEKDKK). The segment covering 400-409 (SDGKAEKDKK) has biased composition (basic and acidic residues). Residues 419–439 (YAITGGAIIAILFILSVCAGL) traverse the membrane as a helical segment. The Cytoplasmic segment spans residues 440–846 (KCYKKFNNKK…AFHDEVIGIH (407 aa)). Residues 476–618 (SISVLIVYSH…IPNSLMTMTT (143 aa)) form the SEFIR domain. Positions 737-771 (GPIHVEPTEPEVLEPAEEPMEEAEEDEEDEDDVDS) are disordered. Positions 744 to 771 (TEPEVLEPAEEPMEEAEEDEEDEDDVDS) are enriched in acidic residues.

In terms of assembly, component of a heterodimeric receptor complex composed of ilcr-1 and ilcr-2. The receptor complex interacts with actl-1 and ilc-17.1 with the interaction being mediated by ilcr-2. In terms of tissue distribution, expressed in most neurons.

It is found in the cell membrane. Its function is as follows. Forms a receptor complex together with receptor ilcr-2, which upon activation acts as a modulator of neuronal activity. Binding of the ligand ilc-17.1 to the ilcr-1/2 receptor complex triggers a signaling cascade that activates the downstream signaling components actl-1, pik-1 and nfki-1, and results in increased neuronal activity in RMG interneurons in response to input from oxygen-sensing neurons. This leads to increased animal movement and promotes aggregation behavior. This Caenorhabditis elegans protein is Interleukin cytokine receptor-related protein 1.